The primary structure comprises 401 residues: Beta-ketoadipyl-CoA thiolase (401 aa).

The active-site Acyl-thioester intermediate is Cys-91. Active-site proton acceptor residues include His-357 and Cys-387.

It belongs to the thiolase-like superfamily. Thiolase family.

It catalyses the reaction succinyl-CoA + acetyl-CoA = 3-oxoadipyl-CoA + CoA. Its pathway is aromatic compound metabolism; beta-ketoadipate pathway; acetyl-CoA and succinyl-CoA from 3-oxoadipate: step 2/2. Catalyzes thiolytic cleavage of beta-ketoadipyl-CoA to succinyl-CoA and acetyl-CoA. This Pseudomonas aeruginosa (strain ATCC 15692 / DSM 22644 / CIP 104116 / JCM 14847 / LMG 12228 / 1C / PRS 101 / PAO1) protein is Beta-ketoadipyl-CoA thiolase (pcaF).